We begin with the raw amino-acid sequence, 464 residues long: Chromosomal replication initiator protein DnaA (464 aa).

The tract at residues 1–74 (MDAVGYEVFW…ERKFLELSGH (74 aa)) is domain I, interacts with DnaA modulators. Positions 74-117 (HPIKLLFAVKKGTPHGNTAPPKHVHTYLEKNSPAEVPSKKSFHP) are domain II. The domain III, AAA+ region stretch occupies residues 118-341 (DLNRDYTFEN…GALTKIIAFI (224 aa)). The ATP site is built by Gly-162, Gly-164, Lys-165, and Thr-166. Residues 342 to 464 (EVSGSITIDI…LKSKVQDSIR (123 aa)) form a domain IV, binds dsDNA region.

This sequence belongs to the DnaA family. Oligomerizes as a right-handed, spiral filament on DNA at oriC.

It localises to the cytoplasm. Its function is as follows. Plays an essential role in the initiation and regulation of chromosomal replication. ATP-DnaA binds to the origin of replication (oriC) to initiate formation of the DNA replication initiation complex once per cell cycle. Binds the DnaA box (a 9 base pair repeat at the origin) and separates the double-stranded (ds)DNA. Forms a right-handed helical filament on oriC DNA; dsDNA binds to the exterior of the filament while single-stranded (ss)DNA is stabiized in the filament's interior. The ATP-DnaA-oriC complex binds and stabilizes one strand of the AT-rich DNA unwinding element (DUE), permitting loading of DNA polymerase. After initiation quickly degrades to an ADP-DnaA complex that is not apt for DNA replication. Binds acidic phospholipids. This is Chromosomal replication initiator protein DnaA from Treponema pallidum (strain Nichols).